Here is a 499-residue protein sequence, read N- to C-terminus: Glycerol kinase (499 aa).

Thr-13 lines the ADP pocket. Residues Thr-13, Thr-14, and Ser-15 each coordinate ATP. Thr-13 is a sn-glycerol 3-phosphate binding site. Arg-17 serves as a coordination point for ADP. 4 residues coordinate sn-glycerol 3-phosphate: Arg-83, Glu-84, Tyr-135, and Asp-245. Glycerol-binding residues include Arg-83, Glu-84, Tyr-135, Asp-245, and Gln-246. ADP contacts are provided by Thr-267 and Gly-310. ATP contacts are provided by Thr-267, Gly-310, Gln-314, and Gly-411. Residues Gly-411 and Asn-415 each contribute to the ADP site.

Belongs to the FGGY kinase family.

The catalysed reaction is glycerol + ATP = sn-glycerol 3-phosphate + ADP + H(+). It participates in polyol metabolism; glycerol degradation via glycerol kinase pathway; sn-glycerol 3-phosphate from glycerol: step 1/1. Inhibited by fructose 1,6-bisphosphate (FBP). Functionally, key enzyme in the regulation of glycerol uptake and metabolism. Catalyzes the phosphorylation of glycerol to yield sn-glycerol 3-phosphate. The polypeptide is Glycerol kinase (Xanthomonas campestris pv. campestris (strain ATCC 33913 / DSM 3586 / NCPPB 528 / LMG 568 / P 25)).